The following is a 95-amino-acid chain: Protein FAM240C (95 aa).

The tract at residues 68-95 (KMLQGPGRCPDRVPEATESLHTKDKKAA) is disordered. Residues 76-95 (CPDRVPEATESLHTKDKKAA) show a composition bias toward basic and acidic residues.

This sequence belongs to the FAM240 family.

The sequence is that of Protein FAM240C (FAM240C) from Homo sapiens (Human).